Reading from the N-terminus, the 345-residue chain is IGF-like family receptor 1 (345 aa).

Residues 1 to 20 form the signal peptide; sequence MGPSWLLWTVAVAVLLLTRA. Over 21 to 163 the chain is Extracellular; the sequence is ASMEASSFCG…SSRPGFVSAS (143 aa). Residue Asn-87 is glycosylated (N-linked (GlcNAc...) asparagine). The tract at residues 106–149 is disordered; that stretch reads VESPGRTHKQCRKKPVPPKDVCPLKPEDAGASSSPGRWSLGQTT. Over residues 111–121 the composition is skewed to basic residues; it reads RTHKQCRKKPV. Residues 136–149 show a composition bias toward polar residues; it reads ASSSPGRWSLGQTT. A helical membrane pass occupies residues 164 to 184; sequence VLPLAVLPLLLVLLLILAVVL. The Cytoplasmic portion of the chain corresponds to 185 to 345; sequence LSLFKRKVRS…DALQVLSKLG (161 aa).

Ubiquitously expressed with higher expression in lymph node. Highly expressed in T-cells and monocytes.

It is found in the cell membrane. Functionally, probable cell membrane receptor for the IGF-like family protein IGFL. In Mus musculus (Mouse), this protein is IGF-like family receptor 1 (Igflr1).